The sequence spans 613 residues: Forkhead box protein O (613 aa).

Disordered stretches follow at residues 39-90 (RARS…KNSS), 182-205 (KSVR…RAKK), 217-269 (GLND…RLSP), and 317-360 (QGFS…PASG). Phosphothreonine; by PKB/AKT1 is present on Thr-44. Residues 63–80 (TKASNQQLAPGDSQQAIQ) are compositionally biased toward polar residues. Ser-75 is modified (phosphoserine). The segment covering 81–90 (NANAAKKNSS) has biased composition (low complexity). Residues 95–201 (WGNLSYADLI…ETSRYEKRRG (107 aa)) constitute a DNA-binding region (fork-head). Phosphoserine; by PKB/AKT1 is present on Ser-190. Polar residues-rich tracts occupy residues 221 to 230 (ATPSPSSSVS) and 256 to 265 (RASSNASSCG). Ser-259 bears the Phosphoserine; by PKB/AKT1 mark. Ser-262, Ser-263, and Ser-268 each carry phosphoserine. Over residues 327-336 (SQPPPPPYQP) the composition is skewed to pro residues. Over residues 337–353 (PQHQQAQQQQQQQSPYA) the composition is skewed to low complexity.

As to quaternary structure, interacts with melt.

The protein localises to the cytoplasm. The protein resides in the nucleus. Its function is as follows. Transcription factor involved in the regulation of the insulin signaling pathway. Consistently activates both the downstream target Thor\d4EBP and the feedback control target InR. Involved in negative regulation of the cell cycle, modulating cell growth and proliferation. In response to cellular stresses, such as nutrient deprivation or increased levels of reactive oxygen species, foxo is activated and inhibits growth through the action of target genes such as Thor. Foxo activated in the adult fat body can regulate lifespan in adults; an insulin peptide itself may function as one secondary messenger of insulin-regulated aging. Also regulates Lip4, homolog of human acid lipases, thereby acting as a key modulator of lipid metabolism by insulin signaling and integrates insulin responses to glucose and lipid homeostasis. This chain is Forkhead box protein O, found in Drosophila melanogaster (Fruit fly).